The chain runs to 1171 residues: Topoisomerase 1-associated factor 1 (1171 aa).

2 disordered regions span residues 568-592 (RRKQ…DSDT) and 880-1171 (PAED…DSDS). A compositionally biased stretch (basic and acidic residues) spans 887 to 910 (VDPRDLMRRKRTAADTDSSRHEFT). The span at 938–950 (ALKTLKQRRRRRR) shows a compositional bias: basic residues. The segment covering 954-964 (DAEESGPDEAV) has biased composition (acidic residues). A compositionally biased stretch (basic and acidic residues) spans 965-993 (LEARRTAREKNALERQRKIKSDLYVHASD). Over residues 1033 to 1048 (TKKKSKASAGRKRKVK) the composition is skewed to basic residues. The span at 1085–1100 (GSTSPRRSQTPPTSAD) shows a compositional bias: polar residues.

Belongs to the timeless family. Component of the fork protection complex (FPC) consisting of TOF1 and CSM3.

Its subcellular location is the nucleus. In terms of biological role, forms a fork protection complex (FPC) with CSM3 and which is required for chromosome segregation during meiosis and DNA damage repair. FPC coordinates leading and lagging strand synthesis and moves with the replication fork. FPC stabilizes replication forks in a configuration that is recognized by replication checkpoint sensors. The sequence is that of Topoisomerase 1-associated factor 1 (TOF1) from Coccidioides immitis (strain RS) (Valley fever fungus).